Reading from the N-terminus, the 149-residue chain is Transcriptional repressor NrdR (149 aa).

A zinc finger lies at 3 to 34; the sequence is CPFCGHAATQVIDTRMSEEGDTVRRRRRCESC. The ATP-cone domain maps to 49-139; that stretch reads PAVVKKNGSR…VYRSFEDVSE (91 aa).

This sequence belongs to the NrdR family. Requires Zn(2+) as cofactor.

Its function is as follows. Negatively regulates transcription of bacterial ribonucleotide reductase nrd genes and operons by binding to NrdR-boxes. This Ralstonia nicotianae (strain ATCC BAA-1114 / GMI1000) (Ralstonia solanacearum) protein is Transcriptional repressor NrdR.